The following is a 619-amino-acid chain: MNLKGKTLKELEEVSLSIRERILEVVSHNGGHLSSTLGAVELIVGMHAVFDSSRDPFIFDVSHQAYAHKLLTGRWEEFATLRQFEGVSGFTKPSESEHDYFIAGHSSTSISLAVGAAKAISLSLEKNRMPVVLIGDGSMSAGLCYEALNELGDRKYPMVILLNDNEMSIAEPIGAISKYLSQAIAGRFFQSIKGKVEKLLAHLPEGASYMAKRFEESLKLITPGILFEELGLEYIGPIDGHNLKEIIETLRIAKAMNKPVIIHAQTLKGKGYKIAEGPREHWHGVGPFDLSSGEPLKKPCSSSPTDIFSRTLLELAKEDEKVVGVTAAMPSGTGLSALVHEFPNRFWDVAIAEQHAVTSMAALAKEGYKPFVAIYSTFLQRAYDQIIHDVGIMKLPVKFAIDRGGIVGEDGETHQGILDIGYLRLIPHMTLMAPRSNESLKEAVKFAKDFSLGPIAFRYPRKSFVLQEGIFSESPFLYGKAERLMEGKDEVLFVGFGNGVGRAYEVSKVMASEYEVGLVDLRFVKPLDHETLWELSKEYRYWLVFSDASKVGGVASALLEWKAEVGAEVEILSMELEDEYIQHGKVEQVEEEIGFDVKGLSQKVRERLERIANSQRLLV.

Thiamine diphosphate is bound by residues histidine 63 and 104–106; that span reads GHS. Aspartate 136 is a Mg(2+) binding site. Residues 137-138, asparagine 165, tyrosine 272, and glutamate 353 each bind thiamine diphosphate; that span reads GS. Asparagine 165 is a binding site for Mg(2+).

This sequence belongs to the transketolase family. DXPS subfamily. Homodimer. Mg(2+) is required as a cofactor. It depends on thiamine diphosphate as a cofactor.

The catalysed reaction is D-glyceraldehyde 3-phosphate + pyruvate + H(+) = 1-deoxy-D-xylulose 5-phosphate + CO2. The protein operates within metabolic intermediate biosynthesis; 1-deoxy-D-xylulose 5-phosphate biosynthesis; 1-deoxy-D-xylulose 5-phosphate from D-glyceraldehyde 3-phosphate and pyruvate: step 1/1. Functionally, catalyzes the acyloin condensation reaction between C atoms 2 and 3 of pyruvate and glyceraldehyde 3-phosphate to yield 1-deoxy-D-xylulose-5-phosphate (DXP). This is 1-deoxy-D-xylulose-5-phosphate synthase from Wolinella succinogenes (strain ATCC 29543 / DSM 1740 / CCUG 13145 / JCM 31913 / LMG 7466 / NCTC 11488 / FDC 602W) (Vibrio succinogenes).